The following is a 605-amino-acid chain: Beta-hexosaminidase ARB_07893 (605 aa).

The N-terminal stretch at 1–18 (MLWIWVPGILGLFGRVEA) is a signal peptide. N-linked (GlcNAc...) asparagine glycosylation occurs at N30. E293 acts as the Nucleophile in catalysis. Residue N342 is glycosylated (N-linked (GlcNAc...) asparagine). E374 serves as the catalytic Proton donor. N449 carries N-linked (GlcNAc...) asparagine glycosylation.

This sequence belongs to the glycosyl hydrolase 20 family.

The protein resides in the secreted. The enzyme catalyses Hydrolysis of terminal non-reducing N-acetyl-D-hexosamine residues in N-acetyl-beta-D-hexosaminides.. Beta-hexosaminidase that shows a broad substrate specificity. The protein is Beta-hexosaminidase ARB_07893 of Arthroderma benhamiae (strain ATCC MYA-4681 / CBS 112371) (Trichophyton mentagrophytes).